Here is a 345-residue protein sequence, read N- to C-terminus: Neurotrimin (345 aa).

The N-terminal stretch at 1 to 30 is a signal peptide; it reads MGVCGSLFLPWKCLVVVSLRLLFLVPTGVP. Ig-like C2-type domains follow at residues 39 to 126, 136 to 218, and 222 to 309; these read PKAM…PKTS, PKIV…VKVT, and PPYI…ASIT. N-linked (GlcNAc...) asparagine glycans are attached at residues Asn-44, Asn-70, and Asn-152. A disulfide bond links Cys-57 and Cys-115. Cystine bridges form between Cys-157-Cys-201 and Cys-243-Cys-295. N-linked (GlcNAc...) asparagine glycosylation is found at Asn-284, Asn-292, Asn-305, and Asn-321. Asn-321 carries GPI-anchor amidated asparagine lipidation. Residues 322 to 345 constitute a propeptide, removed in mature form; it reads GTSSRRAGCLWLLPLLVLHLLLKF.

This sequence belongs to the immunoglobulin superfamily. IgLON family.

The protein resides in the cell membrane. Its function is as follows. Neural cell adhesion molecule. In Bos taurus (Bovine), this protein is Neurotrimin (NTM).